A 245-amino-acid polypeptide reads, in one-letter code: tRNA (guanine-N(1)-)-methyltransferase (245 aa).

Residues G108 and 127 to 132 (IGDYVL) contribute to the S-adenosyl-L-methionine site.

It belongs to the RNA methyltransferase TrmD family. In terms of assembly, homodimer.

It is found in the cytoplasm. It carries out the reaction guanosine(37) in tRNA + S-adenosyl-L-methionine = N(1)-methylguanosine(37) in tRNA + S-adenosyl-L-homocysteine + H(+). Its function is as follows. Specifically methylates guanosine-37 in various tRNAs. This Lactobacillus delbrueckii subsp. bulgaricus (strain ATCC 11842 / DSM 20081 / BCRC 10696 / JCM 1002 / NBRC 13953 / NCIMB 11778 / NCTC 12712 / WDCM 00102 / Lb 14) protein is tRNA (guanine-N(1)-)-methyltransferase.